Reading from the N-terminus, the 89-residue chain is Small ribosomal subunit protein uS15 (89 aa).

Belongs to the universal ribosomal protein uS15 family. As to quaternary structure, part of the 30S ribosomal subunit. Forms a bridge to the 50S subunit in the 70S ribosome, contacting the 23S rRNA.

Functionally, one of the primary rRNA binding proteins, it binds directly to 16S rRNA where it helps nucleate assembly of the platform of the 30S subunit by binding and bridging several RNA helices of the 16S rRNA. In terms of biological role, forms an intersubunit bridge (bridge B4) with the 23S rRNA of the 50S subunit in the ribosome. This chain is Small ribosomal subunit protein uS15, found in Shewanella frigidimarina (strain NCIMB 400).